Consider the following 215-residue polypeptide: Oligoribonuclease (215 aa).

An Exonuclease domain is found at 5 to 170 (LVWIDCEMTG…ADIHESIREL (166 aa)). Y127 is a catalytic residue. Residues 196-215 (LSDGAGAQEETDSAEAPQSG) are disordered.

This sequence belongs to the oligoribonuclease family.

The protein resides in the cytoplasm. 3'-to-5' exoribonuclease specific for small oligoribonucleotides. This chain is Oligoribonuclease, found in Mycobacterium bovis (strain BCG / Pasteur 1173P2).